The chain runs to 58 residues: Keratin-associated protein 21-3 (58 aa).

Interacts with hair keratins.

In terms of biological role, in the hair cortex, hair keratin intermediate filaments are embedded in an interfilamentous matrix, consisting of hair keratin-associated proteins (KRTAP), which are essential for the formation of a rigid and resistant hair shaft through their extensive disulfide bond cross-linking with abundant cysteine residues of hair keratins. The matrix proteins include the high-sulfur and high-glycine-tyrosine keratins. The sequence is that of Keratin-associated protein 21-3 (KRTAP21-3) from Homo sapiens (Human).